The primary structure comprises 122 residues: Large ribosomal subunit protein uL18 (122 aa).

The protein belongs to the universal ribosomal protein uL18 family. In terms of assembly, part of the 50S ribosomal subunit; part of the 5S rRNA/L5/L18/L25 subcomplex. Contacts the 5S and 23S rRNAs.

Functionally, this is one of the proteins that bind and probably mediate the attachment of the 5S RNA into the large ribosomal subunit, where it forms part of the central protuberance. The chain is Large ribosomal subunit protein uL18 from Dictyoglomus turgidum (strain DSM 6724 / Z-1310).